The sequence spans 389 residues: Indole-3-acetate monooxygenase (389 aa).

This sequence belongs to the HpaH/HsaA monooxygenase family.

It catalyses the reaction (indol-3-yl)acetate + NADH + O2 + H(+) = 2-hydroxy-(1H-indol-3-yl)acetate + NAD(+) + H2O. The enzyme catalyses indole + NADH + O2 + H(+) = indoxyl + NAD(+) + H2O. In terms of biological role, involved in the degradation of the plant hormone indole-3-acetic acid (IAA). Catalyzes the first step of the pathway, the conversion of IAA to 2-hydroxy-IAA (2-OH-IAA). Can also convert indole to indoxyl, which spontaneously dimerizes in the presence of oxygen to form the blue pigment indigo. The protein is Indole-3-acetate monooxygenase of Pseudomonas putida (Arthrobacter siderocapsulatus).